The following is a 599-amino-acid chain: PR domain zinc finger protein 5 (599 aa).

One can recognise an SET domain in the interval 8-124 (DRFALKSSRV…TDTELLIGYL (117 aa)). C2H2-type zinc fingers lie at residues 167–190 (FACPQCESSFPSEEVLTEHLQSLH), 199–221 (FKCENCGKKFPVRQALQRHFEQH), 231–256 (FVCKADSCGKRLKSKDALRRHQENVH), 264–286 (LICSVCNRKCTSVSSLQEHRKIH), 289–311 (FDCQECMKKFISANQLKRHMITH), 317–339 (YNCEICNKSFKRLDQVGAHKVIH), 345–367 (YQCKLCGKGFAHRNVYKNHKKTH), 373–395 (FQCDACKALFRTPFSLQRHLLIH), 401–424 (FKCHHCDATFKRKDTLNVHVQVVH), 430–452 (YRCELCNKAFVTPSVLRSHKKTH), 458–480 (KVCPYCGQKFASSGTLRVHIRSH), and 486–508 (YQCPYCEKGFSKNDGLKMHIRTH). Residues 514–536 (YQCSECSKAFSQKRGLDEHKRTH) form a C2H2-type 13; degenerate zinc finger. C2H2-type zinc fingers lie at residues 542-564 (FQCDVCDLAFSLKKMLIRHKMTH) and 571-594 (AECHFCHKKFTRNDYLKVHMDNIH).

It belongs to the class V-like SAM-binding methyltransferase superfamily. As to quaternary structure, interacts with EHMT2/G9A, GFI1 and HDAC1.

It is found in the nucleus. In terms of biological role, sequence-specific DNA-binding transcription factor. Represses transcription at least in part by recruitment of the histone methyltransferase EHMT2/G9A and histone deacetylases such as HDAC1. Regulates hematopoiesis-associated protein-coding and microRNA (miRNA) genes. May regulate the expression of proteins involved in extracellular matrix development and maintenance, connective tissue components and molecules regulating cell migration and adhesion. May cause G2/M arrest and apoptosis in cancer cells. In Mus musculus (Mouse), this protein is PR domain zinc finger protein 5 (Prdm5).